We begin with the raw amino-acid sequence, 263 residues long: Isoprenyl transferase (263 aa).

Asp38 is a catalytic residue. Asp38 serves as a coordination point for Mg(2+). Substrate is bound by residues 39–42 (GNRR), His55, and 83–85 (STD). Catalysis depends on Asn86, which acts as the Proton acceptor. Substrate contacts are provided by residues Phe87, Arg89, Arg212, and 218–220 (RLS). Glu231 contributes to the Mg(2+) binding site.

This sequence belongs to the UPP synthase family. In terms of assembly, homodimer. Requires Mg(2+) as cofactor.

Functionally, catalyzes the condensation of isopentenyl diphosphate (IPP) with allylic pyrophosphates generating different type of terpenoids. The chain is Isoprenyl transferase from Thermus thermophilus (strain ATCC 27634 / DSM 579 / HB8).